A 470-amino-acid polypeptide reads, in one-letter code: 3-isopropylmalate dehydratase large subunit (470 aa).

Positions 351, 411, and 414 each coordinate [4Fe-4S] cluster.

Belongs to the aconitase/IPM isomerase family. LeuC type 1 subfamily. As to quaternary structure, heterodimer of LeuC and LeuD. [4Fe-4S] cluster is required as a cofactor.

It catalyses the reaction (2R,3S)-3-isopropylmalate = (2S)-2-isopropylmalate. Its pathway is amino-acid biosynthesis; L-leucine biosynthesis; L-leucine from 3-methyl-2-oxobutanoate: step 2/4. Its function is as follows. Catalyzes the isomerization between 2-isopropylmalate and 3-isopropylmalate, via the formation of 2-isopropylmaleate. The chain is 3-isopropylmalate dehydratase large subunit from Shewanella frigidimarina (strain NCIMB 400).